The chain runs to 3323 residues: Mucin-3A (3323 aa).

Positions 1 to 15 are cleaved as a signal peptide; the sequence is MQLLGLLGLLWMLKA. Disordered regions lie at residues 218–243, 270–289, 325–345, 359–380, 539–677, 700–722, 734–756, 909–991, 1170–1201, 1318–1356, 1380–1442, 1484–1509, 1714–1746, 1793–1844, and 1900–2056; these read TISS…TSPT, TSMT…SSPT, ISRS…STVT, GTLS…TETA, MSAS…PSTE, NASS…GTNS, ETSS…KTAK, SFSS…TLTP, ISSA…TTPT, AESA…FPSS, AMTS…TNPV, TMTE…ETAK, TPSS…TPTS, FTSS…YPTS, and TSHS…SHST. The span at 270 to 284 shows a compositional bias: low complexity; it reads TSMTTTASQPTATNT. A compositionally biased stretch (polar residues) spans 545-563; it reads GTTHTESISSPPASTSTLH. A compositionally biased stretch (low complexity) spans 564-618; the sequence is TTAESTLAPTTTTSFTTSTTMEPPSTTAATTGTGQTTFTSSTATFPETTTPTPTT. Residues 619-629 are compositionally biased toward polar residues; that stretch reads DMSTESLTTAM. Residues 630 to 676 are compositionally biased toward low complexity; it reads TSPPITSSVTSTNTVTSMTTTTSPPTTTNSFTSLTSMPLSSTPVPST. Over residues 700–721 the composition is skewed to polar residues; sequence NASSMTTSETTYPNSPTGPGTN. Residues 909 to 918 show a composition bias toward low complexity; the sequence is SFSSSMSESS. The span at 919–932 shows a compositional bias: polar residues; sequence AGTTHTESISSPRG. Over residues 933–991 the composition is skewed to low complexity; sequence TTSTLHTTVESTPSPTTTTSFTTSTMMEPPSSTVSTTGRGQTTFPSSTATFPETTTLTP. Low complexity predominate over residues 1324–1356; that stretch reads PTTTTSFTTSPTMEPPSTTVATTGTGQTTFPSS. A run of 32 repeats spans residues 1893 to 1910, 1911 to 1927, 1928 to 1944, 1945 to 1961, 1962 to 1978, 1979 to 1995, 1996 to 2012, 2013 to 2029, 2030 to 2046, 2047 to 2062, 2063 to 2079, 2080 to 2096, 2097 to 2113, 2114 to 2130, 2131 to 2147, 2148 to 2164, 2165 to 2191, 2192 to 2208, 2209 to 2225, 2226 to 2242, 2243 to 2259, 2260 to 2276, 2277 to 2293, 2294 to 2310, 2311 to 2327, 2328 to 2344, 2345 to 2361, 2362 to 2378, 2379 to 2395, 2396 to 2412, 2413 to 2429, and 2430 to 2446. Positions 1893-2446 are 32 X approximate tandem repeats, Ser/Thr-rich; it reads VTTTTKITSH…SESTPSLSSS (554 aa). Positions 1907 to 1947 are enriched in polar residues; the sequence is FTSSIATTETPSHSTPRFTSSITTTETPSHSTPRFTSSITN. Low complexity predominate over residues 1948–2056; it reads TKTTSHSSPS…ITTETTSHST (109 aa). Low complexity-rich tracts occupy residues 2100-2170, 2177-2384, 2393-2447, and 2464-2507; these read TETT…TTET, TTET…TTET, TSWV…SSST, and TTSE…TTTT. Disordered regions lie at residues 2100–2447, 2464–2508, 2578–2608, 2631–2656, 2834–2858, and 2897–2937; these read TETT…SSST, TTSE…TTTD, TQTP…DSST, IPST…TSTS, MMPE…VPTN, and SSLP…TSRR. Polar residues predominate over residues 2578 to 2602; that stretch reads TQTPPVLTSATGTQTSPAPTTVTFG. Composition is skewed to low complexity over residues 2633-2656, 2834-2849, and 2905-2937; these read STHS…TSTS, MMPE…ASSS, and TSSK…TSRR. The region spanning 2976–3009 is the EGF-like domain; the sequence is SGDRCQLQTRCQNGGQWDGLKCQCPSTFYGSSCE. Cystine bridges form between cysteine 2980–cysteine 2986 and cysteine 2999–cysteine 3008. Residues 3018 to 3143 enclose the SEA domain; the sequence is DVVETEVGME…DSIKVNNNSK (126 aa). The helical transmembrane segment at 3227-3247 threads the bilayer; the sequence is LVGGLTAGAALLVLLLLALGV.

In terms of processing, highly O-glycosylated and probably also N-glycosylated. As to expression, broad specificity; small intestine, colon, colonic tumors, heart, liver, thymus, prostate, pancreas and gall bladder.

It is found in the membrane. It localises to the secreted. Its function is as follows. Major glycoprotein component of a variety of mucus gels. Thought to provide a protective, lubricating barrier against particles and infectious agents at mucosal surfaces. May be involved in ligand binding and intracellular signaling. This chain is Mucin-3A, found in Homo sapiens (Human).